A 656-amino-acid polypeptide reads, in one-letter code: DNA topoisomerase 3 (656 aa).

The region spanning 2 to 156 (KVLCVAEKNS…QVYRAVFSHL (155 aa)) is the Toprim domain. Residues 172-635 (DMKSVHAVGT…DIVEKYRKYW (464 aa)) enclose the Topo IA-type catalytic domain. Tyr-356 functions as the O-(5'-phospho-DNA)-tyrosine intermediate in the catalytic mechanism.

Belongs to the type IA topoisomerase family. In terms of assembly, forms a complex with SGS1 and RMI1. Interacts with SGS1.

The enzyme catalyses ATP-independent breakage of single-stranded DNA, followed by passage and rejoining.. Releases the supercoiling and torsional tension of DNA introduced during the DNA replication and transcription by transiently cleaving and rejoining one strand of the DNA duplex. Introduces a single-strand break via transesterification at a target site in duplex DNA. The scissile phosphodiester is attacked by the catalytic tyrosine of the enzyme, resulting in the formation of a DNA-(5'-phosphotyrosyl)-enzyme intermediate and the expulsion of a 3'-OH DNA strand. The free DNA strand than undergoes passage around the unbroken strand thus removing DNA supercoils. Finally, in the religation step, the DNA 3'-OH attacks the covalent intermediate to expel the active-site tyrosine and restore the DNA phosphodiester backbone. Essential for proper chromosome segregation in both meiosis and mitosis. Weakly relaxes negative supercoils and displays a distinct preference for binding single-stranded DNA. The TOP3-SGS1 protein complex may function as a eukaryotic reverse gyrase introducing positive supercoils into extrachromosomal ribosomal DNA rings. This Saccharomyces cerevisiae (strain ATCC 204508 / S288c) (Baker's yeast) protein is DNA topoisomerase 3 (TOP3).